The following is a 324-amino-acid chain: Tetrachlorobenzoquinone reductase (324 aa).

The 103-residue stretch at 5–107 folds into the FAD-binding FR-type domain; that stretch reads VSTIDMTVTQ…VPPANNFALV (103 aa). The 2Fe-2S ferredoxin-type domain maps to 238-324; it reads FTVVLARRSG…SKSPRLVLDI (87 aa). Positions 273, 278, 281, and 311 each coordinate [2Fe-2S] cluster.

The protein belongs to the PDR/VanB family. In terms of assembly, homotrimer. FMN serves as cofactor. Requires [2Fe-2S] cluster as cofactor.

The catalysed reaction is 2,3,5,6-tetrachlorohydroquinone + NAD(+) + H(+) = 2,3,5,6-tetrachloro-1,4-benzoquinone + NADH. It functions in the pathway xenobiotic degradation; pentachlorophenol degradation. Its activity is regulated as follows. In vitro, activated by tetrachlorohydroquinone (TCHQ) at low concentrations and inhibited at high concentrations (above 200 uM). However, PcpD would only be stimulated by tetrachlorohydroquinone (TCHQ) under in vivo conditions due to the toxicity of tetrachlorohydroquinone (TCHQ). Competitively inhibited by pentachlorophenol (PCP) in a concentration-dependent manner. PcpD is regulated by tetrachlorohydroquinone (TCHQ) and pentachlorophenol (PCP) using a mechanism, which maintains tetrachlorobenzoquinone at a level that would neither significantly decrease the biodegradation of pentachlorophenol (PCP) nor cause cytotoxicity in cells. In terms of biological role, involved in the degradation of the xenobiocide pentachlorophenol (PCP). Catalyzes the reduction of tetrachlorobenzoquinone (TCBQ) to yield tetrachlorohydroquinone (TCHQ). Also able to reduce 2,6-dichloroindophenol (DCIP). The chain is Tetrachlorobenzoquinone reductase from Sphingobium chlorophenolicum.